The sequence spans 339 residues: UDP-galactose transporter homolog 1 (339 aa).

9 consecutive transmembrane segments (helical) span residues 5–25 (ILKHVFAVGGIYCSFLTWGLL), 43–63 (VPYIVALVQATIAMICGLIYI), 91–111 (AISAPLAAYSLSYVDFLTYML), 138–158 (LVVLLVTVGITIFTLDGHKPS), 171–191 (SSLIGFVLLGSSLFLDGLTNA), 208–228 (HLMFALNFFLIVWNVIYMVLV), 246–268 (ISRYLLAYACCGAIGQCFIFYTL), 273–295 (SLVLVMVTVTRKMFSMILSIIVY), and 301–321 (LWQWVGIVIVFTGVVCESMGK).

Belongs to the nucleotide-sugar transporter family. SLC35B subfamily.

Its subcellular location is the endoplasmic reticulum membrane. Its function is as follows. May be involved in specific transport of UDP-Gal from the cytosol to the Golgi lumen. Involved in the maintenance of optimal conditions for the folding of secretory pathway proteins in the endoplasmic reticulum. The polypeptide is UDP-galactose transporter homolog 1 (HUT1) (Kluyveromyces lactis (strain ATCC 8585 / CBS 2359 / DSM 70799 / NBRC 1267 / NRRL Y-1140 / WM37) (Yeast)).